The primary structure comprises 907 residues: Protein translocase subunit SecA (907 aa).

ATP contacts are provided by residues glutamine 87, 105-109, and aspartate 510; that span reads GEGKT. 4 residues coordinate Zn(2+): cysteine 892, cysteine 894, cysteine 903, and histidine 904.

The protein belongs to the SecA family. As to quaternary structure, monomer and homodimer. Part of the essential Sec protein translocation apparatus which comprises SecA, SecYEG and auxiliary proteins SecDF-YajC and YidC. Zn(2+) is required as a cofactor.

Its subcellular location is the cell inner membrane. The protein resides in the cytoplasm. It catalyses the reaction ATP + H2O + cellular proteinSide 1 = ADP + phosphate + cellular proteinSide 2.. Its function is as follows. Part of the Sec protein translocase complex. Interacts with the SecYEG preprotein conducting channel. Has a central role in coupling the hydrolysis of ATP to the transfer of proteins into and across the cell membrane, serving both as a receptor for the preprotein-SecB complex and as an ATP-driven molecular motor driving the stepwise translocation of polypeptide chains across the membrane. The sequence is that of Protein translocase subunit SecA from Acinetobacter baumannii (strain ACICU).